Here is a 213-residue protein sequence, read N- to C-terminus: Amelotin (213 aa).

An N-terminal signal peptide occupies residues 1 to 16; the sequence is MKTMILLLCLLGSAQS. Disordered stretches follow at residues 22 to 43 and 162 to 213; these read NPAS…LPQQ and GAKA…NRTQ. Over residues 33–43 the composition is skewed to polar residues; that stretch reads TPGQVTPLPQQ. The segment covering 169-180 has biased composition (low complexity); sequence GTTPGHVTTPGV.

Belongs to the amelotin family. Phosphorylated by FAM20C in vitro. Post-translationally, O-glycosylated. Specifically expressed in maturation-stage ameloblasts.

The protein resides in the secreted. Is a promoter of calcium phosphate mineralization, playing a critical role in the formation of the compact, mineralized, aprismatic enamel surface layer during the maturation stage of amelogenesis. This chain is Amelotin (Amtn), found in Mus musculus (Mouse).